The sequence spans 227 residues: Large ribosomal subunit protein bL25 (227 aa).

Positions 1–22 (MAETKTLAAAARHGTGKGAARS) are disordered.

This sequence belongs to the bacterial ribosomal protein bL25 family. CTC subfamily. Part of the 50S ribosomal subunit; part of the 5S rRNA/L5/L18/L25 subcomplex. Contacts the 5S rRNA. Binds to the 5S rRNA independently of L5 and L18.

Functionally, this is one of the proteins that binds to the 5S RNA in the ribosome where it forms part of the central protuberance. In Methylocella silvestris (strain DSM 15510 / CIP 108128 / LMG 27833 / NCIMB 13906 / BL2), this protein is Large ribosomal subunit protein bL25.